Here is a 309-residue protein sequence, read N- to C-terminus: Probable 5-dehydro-4-deoxyglucarate dehydratase (309 aa).

The protein belongs to the DapA family.

The catalysed reaction is 5-dehydro-4-deoxy-D-glucarate + H(+) = 2,5-dioxopentanoate + CO2 + H2O. Its pathway is carbohydrate acid metabolism; D-glucarate degradation; 2,5-dioxopentanoate from D-glucarate: step 2/2. The polypeptide is Probable 5-dehydro-4-deoxyglucarate dehydratase (Saccharopolyspora erythraea (strain ATCC 11635 / DSM 40517 / JCM 4748 / NBRC 13426 / NCIMB 8594 / NRRL 2338)).